Reading from the N-terminus, the 403-residue chain is Acetate kinase (403 aa).

Asparagine 8 lines the Mg(2+) pocket. Lysine 15 serves as a coordination point for ATP. Arginine 90 provides a ligand contact to substrate. Residue aspartate 147 is the Proton donor/acceptor of the active site. Residues 207-211, 282-284, and 330-334 each bind ATP; these read HLGSG, DLR, and GVGEN. Mg(2+) is bound at residue glutamate 384.

Belongs to the acetokinase family. As to quaternary structure, homodimer. Requires Mg(2+) as cofactor. The cofactor is Mn(2+).

It is found in the cytoplasm. It carries out the reaction acetate + ATP = acetyl phosphate + ADP. It functions in the pathway metabolic intermediate biosynthesis; acetyl-CoA biosynthesis; acetyl-CoA from acetate: step 1/2. In terms of biological role, catalyzes the formation of acetyl phosphate from acetate and ATP. Can also catalyze the reverse reaction. The polypeptide is Acetate kinase (Exiguobacterium sp. (strain ATCC BAA-1283 / AT1b)).